The sequence spans 515 residues: Gamma aminobutyrate transaminase 1, mitochondrial (515 aa).

The transit peptide at 1 to 57 (MAKISRLFGSTVKAAITAQAGFHGKRIPAVSSLQEHIVKSTPARYNSTQACLENDIS) directs the protein to the mitochondrion. Residue 172 to 173 (GS) coordinates pyridoxal 5'-phosphate. Y205 lines the substrate pocket. D312 lines the pyridoxal 5'-phosphate pocket. Residue K341 coordinates substrate. Residue K341 is modified to N6-(pyridoxal phosphate)lysine.

It belongs to the class-III pyridoxal-phosphate-dependent aminotransferase family. As to expression, expressed in leaves, roots, stems, flowers and fruits.

The protein resides in the mitochondrion. The enzyme catalyses 4-aminobutanoate + pyruvate = succinate semialdehyde + L-alanine. It catalyses the reaction 4-aminobutanoate + glyoxylate = succinate semialdehyde + glycine. Transaminase that degrades gamma-amino butyric acid (GABA) and uses pyruvate or glyoxylate as amino-group acceptor. Cannot use beta-alanine, ornithine, acetylornithine, serine, glycine, asparagine, glutamine, glutamate, valine, leucine, isoleucine, methionine, phenylalanine, histidine, lysine, arginine, aspartate, threonine, tyrosine, tryptophan, proline, or cysteine as amino donors. Acts predominantly in vegetative tissues. This chain is Gamma aminobutyrate transaminase 1, mitochondrial (GABA-TP1), found in Solanum lycopersicum (Tomato).